The chain runs to 220 residues: UPF0643 protein PB2B2.08 (220 aa).

Belongs to the UPF0643 family.

The protein localises to the cytoplasm. The protein resides in the nucleus. The chain is UPF0643 protein PB2B2.08 from Schizosaccharomyces pombe (strain 972 / ATCC 24843) (Fission yeast).